We begin with the raw amino-acid sequence, 209 residues long: MQSKFIVIEGLDGAGKSTAISFVRKYLEKNNLAAIYTREPGGTKIAEELRNLVLHNKYDEEIHSDSELLMIYAGRVQHYRNLIAPALEKGINVVSDRFYWSSMAYQGGGRGVELSKIRALNDNFLNGCEPDLVIYLDIDPILGLQRAQKVGSPDRIEKAGLEFFNRTRKVFKDLVKDLDNAIEIDAAKSIQEVEKQIYLILDKHFNFQN.

10–17 (GLDGAGKS) provides a ligand contact to ATP.

It belongs to the thymidylate kinase family.

The catalysed reaction is dTMP + ATP = dTDP + ADP. Phosphorylation of dTMP to form dTDP in both de novo and salvage pathways of dTTP synthesis. The chain is Thymidylate kinase from Francisella tularensis subsp. holarctica (strain FTNF002-00 / FTA).